Here is a 409-residue protein sequence, read N- to C-terminus: Bone morphogenetic protein 4 (409 aa).

The N-terminal stretch at 1-19 (MIPGNRMLMVVLLCQVLLG) is a signal peptide. A propeptide spanning residues 20-293 (GASHASLIPE…ALTRRRRAKR (274 aa)) is cleaved from the precursor. Serine 91 bears the Phosphoserine mark. 2 N-linked (GlcNAc...) asparagine glycosylation sites follow: asparagine 144 and asparagine 209. The segment at 284–308 (ALTRRRRAKRSPKHHPQRARKKNKN) is disordered. 3 disulfide bridges follow: cysteine 309–cysteine 374, cysteine 338–cysteine 406, and cysteine 342–cysteine 408. N-linked (GlcNAc...) asparagine glycosylation is found at asparagine 351 and asparagine 366.

This sequence belongs to the TGF-beta family. As to quaternary structure, homodimer; disulfide-linked. Interacts with GREM2. Part of a complex consisting of TWSG1 and CHRD. Interacts with the serine proteases, HTRA1 and HTRA3; the interaction with either inhibits BMP4-mediated signaling. The HTRA protease activity is required for this inhibition. Interacts with SOSTDC1. Interacts with FBN1 (via N-terminal domain) and FBN2. Interacts with type I receptor BMPR1A. Interacts with type II receptor BMPR2. Interacts with FSTL1; this interaction inhibits the activation of the BMP4/Smad1/5/8 signaling pathway. Interacts with TGFBR3.

It localises to the secreted. It is found in the extracellular space. Its subcellular location is the extracellular matrix. Functionally, growth factor of the TGF-beta superfamily that plays essential roles in many developmental processes, including neurogenesis, vascular development, angiogenesis and osteogenesis. Acts in concert with PTHLH/PTHRP to stimulate ductal outgrowth during embryonic mammary development and to inhibit hair follicle induction. Initiates the canonical BMP signaling cascade by associating with type I receptor BMPR1A and type II receptor BMPR2. Once all three components are bound together in a complex at the cell surface, BMPR2 phosphorylates and activates BMPR1A. In turn, BMPR1A propagates signal by phosphorylating SMAD1/5/8 that travel to the nucleus and act as activators and repressors of transcription of target genes. Positively regulates the expression of odontogenic development regulator MSX1 via inducing the IPO7-mediated import of SMAD1 to the nucleus. Required for MSX1-mediated mesenchymal molar tooth bud development beyond the bud stage, via promoting Wnt signaling. Acts as a positive regulator of odontoblast differentiation during mesenchymal tooth germ formation, expression is repressed during the bell stage by MSX1-mediated inhibition of CTNNB1 signaling. Able to induce its own expression in dental mesenchymal cells and also in the neighboring dental epithelial cells via an MSX1-mediated pathway. Can also signal through non-canonical BMP pathways such as ERK/MAP kinase, PI3K/Akt, or SRC cascades. For example, induces SRC phosphorylation which, in turn, activates VEGFR2, leading to an angiogenic response. The protein is Bone morphogenetic protein 4 of Suncus murinus (Asian house shrew).